A 1040-amino-acid chain; its full sequence is DIS3-like exonuclease 1 (1040 aa).

Residues 232 to 310 (AGIKSGRYKQ…KGRTGALCEN (79 aa)) form the CSD1 domain. In terms of domain architecture, CSD2 spans 360 to 426 (VLVMPWDYRI…AEIATILVEN (67 aa)). The RNB domain occupies 459 to 808 (RLDLRETHLV…VHRLLLAAVN (350 aa)).

Belongs to the RNR ribonuclease family. In terms of assembly, component of the RNA exosome complex. The cofactor is Mg(2+).

Its subcellular location is the cytoplasm. It catalyses the reaction Exonucleolytic cleavage in the 3'- to 5'-direction to yield nucleoside 5'-phosphates.. Its function is as follows. Catalytic component of the RNA exosome complex which has 3'-&gt;5' exoribonuclease activity and participates in a multitude of cellular RNA processing and degradation events. The sequence is that of DIS3-like exonuclease 1 (dis3l) from Xenopus laevis (African clawed frog).